The chain runs to 77 residues: uncharacterized protein (77 aa).

Basic residues predominate over residues 1–10 (MFNNKGRRNV). The segment at 1–21 (MFNNKGRRNVRNNEVRRNVPV) is disordered. Residues 11–21 (RNNEVRRNVPV) show a composition bias toward basic and acidic residues. Residues 20 to 77 (PVKEGETYTVTIEDMGRGGDGIARVEGFVVFVPETQKGETVNVKITAVKSKFAFAEKI) form the TRAM domain.

This is an uncharacterized protein from Methanocaldococcus jannaschii (strain ATCC 43067 / DSM 2661 / JAL-1 / JCM 10045 / NBRC 100440) (Methanococcus jannaschii).